A 343-amino-acid chain; its full sequence is NADP-dependent alkenal double bond reductase P2 (343 aa).

2 residues coordinate substrate: Tyr52 and Tyr79. NADP(+) is bound by residues Gly164–Gly167, Lys190, Tyr206, Asn230, Cys252–Tyr258, Phe282–Val284, and Asn332.

Belongs to the NADP-dependent oxidoreductase L4BD family. Homodimer.

It carries out the reaction an n-alkanal + NAD(+) = an alk-2-enal + NADH + H(+). It catalyses the reaction an n-alkanal + NADP(+) = an alk-2-enal + NADPH + H(+). Its function is as follows. Catalyzes the reduction of the 7-8 double bond of phenylpropanal substrates, such as p-coumaryl aldehyde and coniferyl aldehyde (in vitro). Has activity towards toxic substrates, such as 4-hydroxy-(2E)-nonenal (in vitro). May play a distinct role in plant antioxidant defense and is possibly involved in NAD(P)/NAD(P)h homeostasis. In Arabidopsis thaliana (Mouse-ear cress), this protein is NADP-dependent alkenal double bond reductase P2 (P2).